The sequence spans 638 residues: MSEIIRVPDIGGDGEVIELLVKTGDLIEVEQGLVVLESAKASMEVPSPKAGVVKSVSVKLGDKLKEGDAIIELEPAAGAAAAPAEAAAVPAAPTQAVDEAEAPSPGASATPAPAAASQEVRVPDIGSAGKARVIEVLVKAGDQVQAEQSLIVLESDKASMEIPSPASGVVESVAIQLNAEVGTGDLILTLRTTGAQAQPTAPAAAAAASPAPAPLAPAAAGPQEVKVPDIGSAGKARVIEVLVKAGDQVQAEQSLIVLESDKASMEIPSPAAGVVESVAVQLNAEVGTGDQILTLRVAGAAPSGPRARGSPGQAAAAPGAAPAPAPVGAPSRNGAKVHAGPAVRQLAREFGVELAAINSTGPRGRILKEDVQAYVKAMMQKAKEAPAAGAASGAGIPPIPPVDFAKYGEIEEVPMTRLMQIGATNLHRSWLNVPHVTQFESADITELEAFRVAQKAVAEKAGVKLTVLPLLLKACAYLLKELPDFNSSLAPSGQALIRKKYVHIGFAVDTPDGLLVPVIRNVDQKSLLQLAAEAAELAEKARSKKLGADAMQGACFTISSLGHIGGTAFTPIVNAPEVAILGVSKASMQPVWDGKAFQPRLMLPLSLSYDHRVINGAAAARFTKRLGDLLADIRAILL.

Lipoyl-binding domains follow at residues 2-74 (SEII…IELE) and 117-191 (SQEV…LTLR). Lys40 carries the post-translational modification N6-lipoyllysine. The span at 90 to 117 (PAAPTQAVDEAEAPSPGASATPAPAAAS) shows a compositional bias: low complexity. Positions 90 to 119 (PAAPTQAVDEAEAPSPGASATPAPAAASQE) are disordered. At Lys157 the chain carries N6-lipoyllysine. The segment at 201–220 (APAAAAAASPAPAPLAPAAA) is disordered. A Lipoyl-binding 3 domain is found at 222-296 (PQEVKVPDIG…GTGDQILTLR (75 aa)). Lys262 is subject to N6-lipoyllysine. Residues 301–320 (APSGPRARGSPGQAAAAPGA) show a composition bias toward low complexity. Positions 301-336 (APSGPRARGSPGQAAAAPGAAPAPAPVGAPSRNGAK) are disordered. The Peripheral subunit-binding (PSBD) domain occupies 338–375 (HAGPAVRQLAREFGVELAAINSTGPRGRILKEDVQAYV). Residues 382 to 638 (AKEAPAAGAA…LLADIRAILL (257 aa)) are catalytic. His611 is an active-site residue.

It belongs to the 2-oxoacid dehydrogenase family. Forms a 24-polypeptide structural core with octahedral symmetry. (R)-lipoate serves as cofactor.

It catalyses the reaction N(6)-[(R)-dihydrolipoyl]-L-lysyl-[protein] + acetyl-CoA = N(6)-[(R)-S(8)-acetyldihydrolipoyl]-L-lysyl-[protein] + CoA. In terms of biological role, the pyruvate dehydrogenase complex catalyzes the overall conversion of pyruvate to acetyl-CoA and CO(2). It contains multiple copies of three enzymatic components: pyruvate dehydrogenase (E1), dihydrolipoamide acetyltransferase (E2) and lipoamide dehydrogenase (E3). This chain is Dihydrolipoyllysine-residue acetyltransferase component of pyruvate dehydrogenase complex, found in Azotobacter vinelandii.